The sequence spans 626 residues: Glutamine--fructose-6-phosphate aminotransferase [isomerizing] (626 aa).

The active-site Nucleophile; for GATase activity is Cys2. The Glutamine amidotransferase type-2 domain maps to Cys2–Thr222. 2 SIS domains span residues Leu293 to Ser441 and Tyr471 to Pro616. The active-site For Fru-6P isomerization activity is Lys621.

In terms of assembly, homodimer.

It localises to the cytoplasm. It catalyses the reaction D-fructose 6-phosphate + L-glutamine = D-glucosamine 6-phosphate + L-glutamate. Catalyzes the first step in hexosamine metabolism, converting fructose-6P into glucosamine-6P using glutamine as a nitrogen source. The polypeptide is Glutamine--fructose-6-phosphate aminotransferase [isomerizing] (Thermosynechococcus vestitus (strain NIES-2133 / IAM M-273 / BP-1)).